A 1323-amino-acid chain; its full sequence is ABC transporter C family member 12 (1323 aa).

The ABC transmembrane type-1 1 domain maps to 110-396 (HCISLFFYSI…LPILIALGIQ (287 aa)). The next 6 membrane-spanning stretches (helical) occupy residues 111–131 (CISLFFYSIYVGSQFVGPEIL), 152–172 (MGYYYALIMFGTAMIGSFCNY), 227–247 (VFGILNNGLFALPQIIICLAL), 252–272 (IGWPTFVGLGLMLAAIPFNGL), 338–358 (ILIAMIGAIPTAASILVFSTY), and 375–395 (SYLNLLKIPLGFLPILIALGI). The ABC transporter 1 domain maps to 428–652 (VYMKNSTTTW…KLEFASLLQE (225 aa)). 464–471 (GSVGSGKS) lines the ATP pocket. Residues 657–695 (ENTKGDDSDDDDDKKDDDKKEEKVEKPKQSDKDGTLISE) are disordered. Residues 672–690 (DDDKKEEKVEKPKQSDKDG) are compositionally biased toward basic and acidic residues. Helical transmembrane passes span 712-732 (VTAGGGLLFLFAMILFLLETG), 772-792 (IYIGVGMASIIVTVVRTFSFF), 840-860 (LIATSIAQFFTLMLSVLATLI), 862-882 (ISIIVPWLLIPLAPICILFFI), and 952-972 (WLGLRLDFLGNLIVFFSCIFI). One can recognise an ABC transmembrane type-1 2 domain in the interval 720–1010 (FLFAMILFLL…GVLQAADTET (291 aa)). The ABC transporter 2 domain maps to 1047–1281 (IKFDNLVMRY…QNGLLTWLVN (235 aa)). An ATP-binding site is contributed by 1081–1088 (GRTGAGKS).

It belongs to the ABC transporter superfamily. ABCC family. Conjugate transporter (TC 3.A.1.208) subfamily.

It is found in the membrane. The protein is ABC transporter C family member 12 (abcC12) of Dictyostelium discoideum (Social amoeba).